The following is a 449-amino-acid chain: MGRLFGTDGVRGVANTELTADLAFKLGRAGAFVLTEGTHKPKILVGMDTRISGDMLEAALVAGILSVGAEAICVGVVPTPAIAYLTRKYKADAGVVISASHNPVEYNGIKFFNKNGYKLKDELEDRIQSIIENNFEGVPSPTGENLGRKITCESAIDDYVEFAKSTIDVDLKGLKIALDCANGASYKTSVETFRELGAEVVVINNDPDGVNINKNCGSTHPEELMDYVVKQGCDLGLAFDGDADRCLAVDEKGNLIDGDFIMTICGKHLKDQGKLKDNMVVVTVMSNLGLSLAFDKENISTIKTKVGDRYVLEEMVKDGYKLGGEQSGHIIFLDYNTTGDGLVTGLQIASIVKETGKTLSELASIMTKLPQVLVNAKVPNNMKDIHEKDAEIAEEIKKIEEKLNGCGRVLIRPSGTEPLVRVMLEGENQEELDKIAHALAKMIEEKANA.

Serine 100 serves as the catalytic Phosphoserine intermediate. The Mg(2+) site is built by serine 100, aspartate 240, aspartate 242, and aspartate 244. Serine 100 carries the phosphoserine modification.

Belongs to the phosphohexose mutase family. It depends on Mg(2+) as a cofactor. Activated by phosphorylation.

The enzyme catalyses alpha-D-glucosamine 1-phosphate = D-glucosamine 6-phosphate. In terms of biological role, catalyzes the conversion of glucosamine-6-phosphate to glucosamine-1-phosphate. The chain is Phosphoglucosamine mutase from Clostridium novyi (strain NT).